The sequence spans 157 residues: Ribosome maturation factor RimP (157 aa).

The protein belongs to the RimP family.

It is found in the cytoplasm. Required for maturation of 30S ribosomal subunits. The polypeptide is Ribosome maturation factor RimP (Synechococcus sp. (strain JA-3-3Ab) (Cyanobacteria bacterium Yellowstone A-Prime)).